The following is a 253-amino-acid chain: Ribosomal RNA small subunit methyltransferase J (253 aa).

S-adenosyl-L-methionine is bound by residues R98–D99, E114–R115, S150–S151, and D172.

It belongs to the methyltransferase superfamily. RsmJ family.

Its subcellular location is the cytoplasm. The catalysed reaction is guanosine(1516) in 16S rRNA + S-adenosyl-L-methionine = N(2)-methylguanosine(1516) in 16S rRNA + S-adenosyl-L-homocysteine + H(+). Functionally, specifically methylates the guanosine in position 1516 of 16S rRNA. The chain is Ribosomal RNA small subunit methyltransferase J from Shewanella pealeana (strain ATCC 700345 / ANG-SQ1).